Consider the following 232-residue polypeptide: Beta-casein (232 aa).

The first 15 residues, 1 to 15, serve as a signal peptide directing secretion; that stretch reads MKVLILACRVALALA. Residues Ser30, Ser32, Ser33, and Ser34 each carry the phosphoserine modification.

The protein belongs to the beta-casein family. Mammary gland specific. Secreted in milk.

The protein resides in the secreted. Important role in determination of the surface properties of the casein micelles. The protein is Beta-casein (CSN2) of Camelus dromedarius (Dromedary).